The sequence spans 254 residues: Autophagy-related protein 5 (254 aa).

Lys102 participates in a covalent cross-link: Glycyl lysine isopeptide (Lys-Gly) (interchain with G-Cter in ATG12).

Belongs to the ATG5 family. As to quaternary structure, conjugated with ATG12. The ATG5-ATG12 conjugate forms a complex with several units of ATG16. The ATG12-ATG5 conjugate also associates with ATG3. Conjugated to ATG12; which is essential for autophagy. Conjugation with ATG12 involves ATG7 as an E1-like activating enzyme and ATG10 as an E2-like conjugating enzyme.

Its subcellular location is the preautophagosomal structure membrane. Its function is as follows. Involved in cytoplasm to vacuole transport (Cvt) and autophagic vesicle formation. Autophagy is essential for maintenance of amino acid levels and protein synthesis under nitrogen starvation. Required for selective autophagic degradation of the nucleus (nucleophagy). Also required for mitophagy, which eliminates defective or superfluous mitochondria in order to fulfill cellular energy requirements and prevent excess ROS production. Conjugation with ATG12, through a ubiquitin-like conjugating system involving ATG7 as an E1-like activating enzyme and ATG10 as an E2-like conjugating enzyme, is essential for its function. The ATG12-ATG5 conjugate acts as an E3-like enzyme which is required for lipidation of ATG8 and ATG8 association to the vesicle membranes. ATG12-ATG5 rearranges the ATG3 catalytic center and enhances its E2 activity. Autophagy is required for proper vegetative growth, asexual/sexual reproduction, and full virulence. Autophagy is particularly involved in the biosynthesis of deoxynivalenol (DON), an important virulence determinant. The chain is Autophagy-related protein 5 from Gibberella zeae (strain ATCC MYA-4620 / CBS 123657 / FGSC 9075 / NRRL 31084 / PH-1) (Wheat head blight fungus).